We begin with the raw amino-acid sequence, 456 residues long: SWI/SNF complex component SNF12 homolog (456 aa).

An SWIB/MDM2 domain is found at 234–310 (HVPQKYKVLG…PQLLREHLSP (77 aa)). A disordered region spans residues 435-456 (KQTTPNPTPQQISMAPSTPQTP).

This sequence belongs to the SMARCD family. As to quaternary structure, part of a SWI-SNF complex.

It localises to the nucleus. In terms of biological role, involved in transcriptional activation and repression of select genes by chromatin remodeling (alteration of DNA-nucleosome topology). The polypeptide is SWI/SNF complex component SNF12 homolog (snf12-1) (Dictyostelium discoideum (Social amoeba)).